The chain runs to 208 residues: Translation initiation factor IF-3 (208 aa).

The protein belongs to the IF-3 family. Monomer.

It is found in the cytoplasm. IF-3 binds to the 30S ribosomal subunit and shifts the equilibrium between 70S ribosomes and their 50S and 30S subunits in favor of the free subunits, thus enhancing the availability of 30S subunits on which protein synthesis initiation begins. This Parabacteroides distasonis (strain ATCC 8503 / DSM 20701 / CIP 104284 / JCM 5825 / NCTC 11152) protein is Translation initiation factor IF-3.